A 319-amino-acid polypeptide reads, in one-letter code: tRNA-cytidine(32) 2-sulfurtransferase (319 aa).

The short motif at 49–54 is the PP-loop motif element; it reads SGGKDS. Residues Cys-124, Cys-127, and Cys-215 each coordinate [4Fe-4S] cluster. The disordered stretch occupies residues 276–319; the sequence is DGDTAFDKEEFRDPAPDADDVEDAPKKRTISILDSRGKESGCGA. 2 stretches are compositionally biased toward basic and acidic residues: residues 280–290 and 310–319; these read AFDKEEFRDPA and SRGKESGCGA.

Belongs to the TtcA family. In terms of assembly, homodimer. It depends on Mg(2+) as a cofactor. Requires [4Fe-4S] cluster as cofactor.

The protein resides in the cytoplasm. It carries out the reaction cytidine(32) in tRNA + S-sulfanyl-L-cysteinyl-[cysteine desulfurase] + AH2 + ATP = 2-thiocytidine(32) in tRNA + L-cysteinyl-[cysteine desulfurase] + A + AMP + diphosphate + H(+). The protein operates within tRNA modification. In terms of biological role, catalyzes the ATP-dependent 2-thiolation of cytidine in position 32 of tRNA, to form 2-thiocytidine (s(2)C32). The sulfur atoms are provided by the cysteine/cysteine desulfurase (IscS) system. The protein is tRNA-cytidine(32) 2-sulfurtransferase of Chromobacterium violaceum (strain ATCC 12472 / DSM 30191 / JCM 1249 / CCUG 213 / NBRC 12614 / NCIMB 9131 / NCTC 9757 / MK).